Consider the following 440-residue polypeptide: NADH-quinone oxidoreductase subunit D (440 aa).

It belongs to the complex I 49 kDa subunit family. As to quaternary structure, NDH-1 is composed of 14 different subunits. Subunits NuoB, C, D, E, F, and G constitute the peripheral sector of the complex.

The protein resides in the cell membrane. It carries out the reaction a quinone + NADH + 5 H(+)(in) = a quinol + NAD(+) + 4 H(+)(out). Its function is as follows. NDH-1 shuttles electrons from NADH, via FMN and iron-sulfur (Fe-S) centers, to quinones in the respiratory chain. The immediate electron acceptor for the enzyme in this species is believed to be a menaquinone. Couples the redox reaction to proton translocation (for every two electrons transferred, four hydrogen ions are translocated across the cytoplasmic membrane), and thus conserves the redox energy in a proton gradient. This chain is NADH-quinone oxidoreductase subunit D, found in Acidothermus cellulolyticus (strain ATCC 43068 / DSM 8971 / 11B).